A 522-amino-acid chain; its full sequence is Peptide methionine sulfoxide reductase MsrA/MsrB (522 aa).

Residues 17–174 (LALGACSPKI…ALALIRDPNA (158 aa)) enclose the Thioredoxin domain. A disulfide bridge links C68 with C71. The tract at residues 199–354 (RTIYLAGGCF…PNGYCHIDIR (156 aa)) is peptide methionine sulfoxide reductase A. The active site involves C207. In terms of domain architecture, MsrB spans 383–506 (DAELKRTLTE…NGASLKFIPL (124 aa)). A disulfide bond links C440 and C495. The Nucleophile role is filled by C495.

In the N-terminal section; belongs to the thioredoxin family. It in the central section; belongs to the MsrA Met sulfoxide reductase family. The protein in the C-terminal section; belongs to the MsrB Met sulfoxide reductase family.

The enzyme catalyses L-methionyl-[protein] + [thioredoxin]-disulfide + H2O = L-methionyl-(S)-S-oxide-[protein] + [thioredoxin]-dithiol. The catalysed reaction is [thioredoxin]-disulfide + L-methionine + H2O = L-methionine (S)-S-oxide + [thioredoxin]-dithiol. It carries out the reaction L-methionyl-[protein] + [thioredoxin]-disulfide + H2O = L-methionyl-(R)-S-oxide-[protein] + [thioredoxin]-dithiol. Its function is as follows. Has an important function as a repair enzyme for proteins that have been inactivated by oxidation. Catalyzes the reversible oxidation-reduction of methionine sulfoxide in proteins to methionine. This is Peptide methionine sulfoxide reductase MsrA/MsrB (msrAB) from Neisseria meningitidis serogroup A / serotype 4A (strain DSM 15465 / Z2491).